Consider the following 299-residue polypeptide: Oxygen-dependent coproporphyrinogen-III oxidase (299 aa).

Serine 92 serves as a coordination point for substrate. A divalent metal cation contacts are provided by histidine 96 and histidine 106. Histidine 106 functions as the Proton donor in the catalytic mechanism. 108-110 (NVR) lines the substrate pocket. A divalent metal cation-binding residues include histidine 145 and histidine 175. Residues 240–275 (YVEFNLVWDRGTLFGLQTGGRTESILMSMPPLVRWE) form an important for dimerization region. 258–260 (GGR) contacts substrate.

It belongs to the aerobic coproporphyrinogen-III oxidase family. In terms of assembly, homodimer. The cofactor is a divalent metal cation.

The protein resides in the cytoplasm. It carries out the reaction coproporphyrinogen III + O2 + 2 H(+) = protoporphyrinogen IX + 2 CO2 + 2 H2O. Its pathway is porphyrin-containing compound metabolism; protoporphyrin-IX biosynthesis; protoporphyrinogen-IX from coproporphyrinogen-III (O2 route): step 1/1. In terms of biological role, involved in the heme biosynthesis. Catalyzes the aerobic oxidative decarboxylation of propionate groups of rings A and B of coproporphyrinogen-III to yield the vinyl groups in protoporphyrinogen-IX. The polypeptide is Oxygen-dependent coproporphyrinogen-III oxidase (Klebsiella pneumoniae subsp. pneumoniae (strain ATCC 700721 / MGH 78578)).